The following is a 787-amino-acid chain: Protein FAM149A (787 aa).

Disordered regions lie at residues 22-105, 144-175, 189-226, 238-284, 432-455, 573-602, and 665-697; these read SPAV…SSGA, GSNSVTASSPRNPRQLRAPGEREPSVWMAPGP, EEWTSDSDSQDDPEGRGLSEGLRKQSSEKSKDPLPTNF, ASES…SWRD, DGDEHLGQSPALRGRKRHRHGLPP, LQQRPTYSADRTQNDQDDKLPGGGVGASSR, and AVQTSRSRLPPIGSETGEPNTAASGSRPVSYRG. Over residues 37-46 the composition is skewed to polar residues; sequence SVDSGASTSL. Low complexity-rich tracts occupy residues 51–65 and 96–105; these read TLTLLPSLPPDTAAS and SGSLPSSSGA. Over residues 144–155 the composition is skewed to polar residues; it reads GSNSVTASSPRN. Residues 189–200 are compositionally biased toward acidic residues; the sequence is EEWTSDSDSQDD. A compositionally biased stretch (basic and acidic residues) spans 201-220; that stretch reads PEGRGLSEGLRKQSSEKSKD. The segment covering 239–250 has biased composition (low complexity); the sequence is SESPSSFSSSGS. Polar residues predominate over residues 251 to 261; it reads RTPTEAHNSWP. The span at 262-274 shows a compositional bias: low complexity; it reads GSSTQSSTTGLST.

This sequence belongs to the FAM149 family.

This chain is Protein FAM149A (Fam149a), found in Mus musculus (Mouse).